Consider the following 125-residue polypeptide: Small ribosomal subunit protein uS13 (125 aa).

The disordered stretch occupies residues 95 to 125 (GLPVNGQRTRTNARTRKGVKKTVANKKKATK). Positions 105-125 (TNARTRKGVKKTVANKKKATK) are enriched in basic residues.

Belongs to the universal ribosomal protein uS13 family. As to quaternary structure, part of the 30S ribosomal subunit. Forms a loose heterodimer with protein S19. Forms two bridges to the 50S subunit in the 70S ribosome.

Functionally, located at the top of the head of the 30S subunit, it contacts several helices of the 16S rRNA. In the 70S ribosome it contacts the 23S rRNA (bridge B1a) and protein L5 of the 50S subunit (bridge B1b), connecting the 2 subunits; these bridges are implicated in subunit movement. Contacts the tRNAs in the A and P-sites. The chain is Small ribosomal subunit protein uS13 from Leptospira biflexa serovar Patoc (strain Patoc 1 / Ames).